We begin with the raw amino-acid sequence, 221 residues long: Endonuclease V (221 aa).

Positions 43 and 111 each coordinate Mg(2+).

This sequence belongs to the endonuclease V family. Requires Mg(2+) as cofactor.

The protein localises to the cytoplasm. The catalysed reaction is Endonucleolytic cleavage at apurinic or apyrimidinic sites to products with a 5'-phosphate.. In terms of biological role, DNA repair enzyme involved in the repair of deaminated bases. Selectively cleaves double-stranded DNA at the second phosphodiester bond 3' to a deoxyinosine leaving behind the intact lesion on the nicked DNA. The chain is Endonuclease V from Azotobacter vinelandii (strain DJ / ATCC BAA-1303).